We begin with the raw amino-acid sequence, 163 residues long: Neurotrophin-3 (163 aa).

A signal peptide spans 1-3; the sequence is IQS. The propeptide occupies 4 to 119; it reads TSMDQGILTE…VLNRTSRRKR (116 aa). The segment at 35–61 is disordered; it reads KQTARTKDGTQTTVKKSEAEADATASQ. An N-linked (GlcNAc...) asparagine glycan is attached at N112.

It belongs to the NGF-beta family.

It is found in the secreted. Functionally, seems to promote the survival of visceral and proprioceptive sensory neurons. This chain is Neurotrophin-3 (NTF3), found in Corallus caninus (Emerald tree boa).